Consider the following 232-residue polypeptide: Phosphatidylserine decarboxylase proenzyme (232 aa).

Ser-190 serves as the catalytic Schiff-base intermediate with substrate; via pyruvic acid. Pyruvic acid (Ser); by autocatalysis is present on Ser-190.

The protein belongs to the phosphatidylserine decarboxylase family. PSD-A subfamily. Heterodimer of a large membrane-associated beta subunit and a small pyruvoyl-containing alpha subunit. Pyruvate serves as cofactor. Post-translationally, is synthesized initially as an inactive proenzyme. Formation of the active enzyme involves a self-maturation process in which the active site pyruvoyl group is generated from an internal serine residue via an autocatalytic post-translational modification. Two non-identical subunits are generated from the proenzyme in this reaction, and the pyruvate is formed at the N-terminus of the alpha chain, which is derived from the carboxyl end of the proenzyme. The post-translation cleavage follows an unusual pathway, termed non-hydrolytic serinolysis, in which the side chain hydroxyl group of the serine supplies its oxygen atom to form the C-terminus of the beta chain, while the remainder of the serine residue undergoes an oxidative deamination to produce ammonia and the pyruvoyl prosthetic group on the alpha chain.

The protein localises to the cell membrane. It carries out the reaction a 1,2-diacyl-sn-glycero-3-phospho-L-serine + H(+) = a 1,2-diacyl-sn-glycero-3-phosphoethanolamine + CO2. It functions in the pathway phospholipid metabolism; phosphatidylethanolamine biosynthesis; phosphatidylethanolamine from CDP-diacylglycerol: step 2/2. Catalyzes the formation of phosphatidylethanolamine (PtdEtn) from phosphatidylserine (PtdSer). The protein is Phosphatidylserine decarboxylase proenzyme of Brucella abortus (strain S19).